The following is a 278-amino-acid chain: Shikimate dehydrogenase (NADP(+)) (278 aa).

Residues Ser-19–Ser-21 and Thr-66 each bind shikimate. Lys-70 functions as the Proton acceptor in the catalytic mechanism. Shikimate-binding residues include Asn-91 and Asp-106. NADP(+)-binding positions include Gly-130 to Ala-134 and Leu-222. Residue Tyr-224 coordinates shikimate. Position 245 (Gly-245) interacts with NADP(+).

The protein belongs to the shikimate dehydrogenase family. As to quaternary structure, homodimer.

The catalysed reaction is shikimate + NADP(+) = 3-dehydroshikimate + NADPH + H(+). The protein operates within metabolic intermediate biosynthesis; chorismate biosynthesis; chorismate from D-erythrose 4-phosphate and phosphoenolpyruvate: step 4/7. Functionally, involved in the biosynthesis of the chorismate, which leads to the biosynthesis of aromatic amino acids. Catalyzes the reversible NADPH linked reduction of 3-dehydroshikimate (DHSA) to yield shikimate (SA). The chain is Shikimate dehydrogenase (NADP(+)) from Methanococcus maripaludis (strain DSM 14266 / JCM 13030 / NBRC 101832 / S2 / LL).